We begin with the raw amino-acid sequence, 1881 residues long: Kinesin-like protein KIF26A (1881 aa).

3 disordered regions span residues 20–66 (PARE…AGGG), 145–193 (PASH…PPGP), and 309–330 (ASKR…STYP). Phosphoserine is present on Ser-30. The Kinesin motor domain occupies 364–718 (KVKVMLRIWP…VQLAARIHRL (355 aa)). Position 462 to 469 (462 to 469 (GHMSLGKS)) interacts with ATP. Disordered regions lie at residues 718 to 778 (LRRK…SSEQ), 794 to 827 (SDRE…RDAD), 846 to 982 (GSEA…QAAL), 1078 to 1104 (YTSQ…GSPA), 1118 to 1266 (LSES…PRLP), 1328 to 1425 (SGSL…PYRP), 1442 to 1633 (SKVR…SGEL), and 1652 to 1698 (YESM…TGLQ). A compositionally biased stretch (basic residues) spans 742-751 (RRPPHLRPFH). The span at 818 to 827 (RPSEGPRDAD) shows a compositional bias: basic and acidic residues. Polar residues predominate over residues 905 to 915 (SDPSKTGTQSE). Residues 940-950 (LPSPAPPPPRQ) show a composition bias toward pro residues. Residues 1084–1095 (EGPGDPGEFPEG) are compositionally biased toward low complexity. Positions 1151 to 1162 (EESKVRSSECGR) are enriched in basic and acidic residues. Ser-1257 is subject to Phosphoserine. The span at 1328-1353 (SGSLKTTSGSKKSVSPKGAFFPRPSG) shows a compositional bias: low complexity. The span at 1366 to 1378 (LEQSTALTPTQAL) shows a compositional bias: polar residues. Positions 1390 to 1399 (RGEEEARPSG) are enriched in basic and acidic residues. Residues 1400–1412 (RSDSSVPKATSSL) show a composition bias toward polar residues. 3 stretches are compositionally biased toward low complexity: residues 1477–1489 (PAKG…PPAG), 1524–1537 (PGPR…PGIG), and 1575–1587 (WGST…NDSG). A compositionally biased stretch (polar residues) spans 1616-1629 (RYSSGHGSDNSSVL). Ser-1654 bears the Phosphoserine mark. A compositionally biased stretch (low complexity) spans 1664 to 1675 (SASSAPDSMSES). The segment covering 1685–1698 (RSLKSPKKRATGLQ) has biased composition (basic residues). Residues 1780 to 1812 (LRLAERRQQRLQEVQAKRDHLCEELAETQGRLM) adopt a coiled-coil conformation.

It belongs to the TRAFAC class myosin-kinesin ATPase superfamily. Kinesin family. KIF26 subfamily. As to quaternary structure, interacts with GRB2 (via SH2 domain). Expressed in several neuronal populations.

It is found in the cytoplasm. Its subcellular location is the cytoskeleton. Its function is as follows. Atypical kinesin that plays a key role in enteric neuron development. Acts by repressing a cell growth signaling pathway in the enteric nervous system development, possibly via its interaction with GRB2 that prevents GRB2-binding to SHC, thereby attenating the GDNF-Ret signaling. Binds to microtubules but lacks microtubule-based motility due to the absence of ATPase activity. Plays a critical role in cerebral cortical development. It probably acts as a microtubule stabilizer that regulates neurite growth and radial migration of cortical excitatory neurons. The sequence is that of Kinesin-like protein KIF26A (Kif26a) from Mus musculus (Mouse).